The following is a 98-amino-acid chain: Large ribosomal subunit protein uL23 (98 aa).

Belongs to the universal ribosomal protein uL23 family. Part of the 50S ribosomal subunit. Contacts protein L29, and trigger factor when it is bound to the ribosome.

One of the early assembly proteins it binds 23S rRNA. One of the proteins that surrounds the polypeptide exit tunnel on the outside of the ribosome. Forms the main docking site for trigger factor binding to the ribosome. This is Large ribosomal subunit protein uL23 from Rickettsia akari (strain Hartford).